Reading from the N-terminus, the 730-residue chain is MHVTRDFSHYVRTAGEGIKHIDLAVEGVHCAGCMAKIERGLSAIPDVTLARVNLTDRRVALEWKAGTLDPGRFIDRLEELGYKAYPFETESAEVAEVAESRFLLRCLGVAAFATMNVMMLSIPVWSGNVSDMLPEQRDFFHWLSALIALPAAAYAGQPFFRSAWRALSAKTTNMDVPISIGVILALGMSVVETIHHAEHAYFDAAIMLLTFLLVGRFLDQNMRRRTRAVAGNLAALKAETAAKFVGPDEISQVPVAAISPGDIVLLRPGERCAVDGTVIEGRSEIDQSLITGETLYVTAEQGTPVYAGSMNISGTLRVRVSAASEATLLAEIARLLDNALQARSRYMRLADRASRLYAPVVHATALITILGWVIAGASWHDAIVTGVAVLIITCPCALGLAIPTVQTVASGAMFKSGVLLNSGDAIERLAEADHVIFDKTGTLTLPDLEVMNAADIPADIFELAGRLALSSHHPVAAAVAQAAGARSPIVGAVEEAGQGVRADVDGAEIRLGRPSFCGAEALVGDGTRLDPEASIVAFSKGAEKFILWVRQGLRPDAQAVIAALKARNIGIEILSGDREPAVKAAAHALAIPEWRAGVTPADKIARIEELKRRGARVLMVGDGMNDAPSLAAAHVSMSPISAAHLSQATADLVFLGRPLAPVAAAIDSARKALHLMRQNLWLAIGYNVLAVPVAISGVVTPLIAAAAMSGSSILVMLNSLRARSDSREIV.

Over 1–101 (MHVTRDFSHY…AEVAEVAESR (101 aa)) the chain is Cytoplasmic. One can recognise an HMA domain in the interval 19–85 (KHIDLAVEGV…RLEELGYKAY (67 aa)). Residues C30 and C33 each coordinate a metal cation. Residues 102-123 (FLLRCLGVAAFATMNVMMLSIP) form a helical membrane-spanning segment. Residues 124 to 138 (VWSGNVSDMLPEQRD) lie on the Extracellular side of the membrane. The helical transmembrane segment at 139 to 162 (FFHWLSALIALPAAAYAGQPFFRS) threads the bilayer. Residues 163–168 (AWRALS) lie on the Cytoplasmic side of the membrane. A helical transmembrane segment spans residues 169–190 (AKTTNMDVPISIGVILALGMSV). Topologically, residues 191–202 (VETIHHAEHAYF) are extracellular. A helical transmembrane segment spans residues 203 to 223 (DAAIMLLTFLLVGRFLDQNMR). Residues 224–352 (RRTRAVAGNL…RSRYMRLADR (129 aa)) are Cytoplasmic-facing. The chain crosses the membrane as a helical span at residues 353–375 (ASRLYAPVVHATALITILGWVIA). Residues 376-382 (GASWHDA) are Extracellular-facing. Residues 383–400 (IVTGVAVLIITCPCALGL) form a helical membrane-spanning segment. The Cytoplasmic portion of the chain corresponds to 401–676 (AIPTVQTVAS…DSARKALHLM (276 aa)). The active-site 4-aspartylphosphate intermediate is the D438. Mg(2+) contacts are provided by D622 and D626. The helical transmembrane segment at 677–696 (RQNLWLAIGYNVLAVPVAIS) threads the bilayer. The Extracellular portion of the chain corresponds to 697 to 701 (GVVTP). A helical membrane pass occupies residues 702-720 (LIAAAAMSGSSILVMLNSL). Topologically, residues 721–730 (RARSDSREIV) are cytoplasmic.

Belongs to the cation transport ATPase (P-type) (TC 3.A.3) family. Type IB subfamily.

Its subcellular location is the cell membrane. It carries out the reaction ATP + H2O = ADP + phosphate + H(+). In terms of biological role, fixI is a pump of a specific cation involved in symbiotic nitrogen fixation. The four proteins FixG, FixH, FixI, and FixS may participate in a membrane-bound complex coupling the FixI cation pump with a redox process catalyzed by FixG. This Bradyrhizobium diazoefficiens (strain JCM 10833 / BCRC 13528 / IAM 13628 / NBRC 14792 / USDA 110) protein is Nitrogen fixation protein FixI (fixI).